The sequence spans 489 residues: UDP-N-acetylmuramate--L-alanine ligase (489 aa).

128-134 is a binding site for ATP; the sequence is GTHGKTT.

This sequence belongs to the MurCDEF family.

The protein resides in the cytoplasm. The enzyme catalyses UDP-N-acetyl-alpha-D-muramate + L-alanine + ATP = UDP-N-acetyl-alpha-D-muramoyl-L-alanine + ADP + phosphate + H(+). It functions in the pathway cell wall biogenesis; peptidoglycan biosynthesis. Its function is as follows. Cell wall formation. This Shewanella sediminis (strain HAW-EB3) protein is UDP-N-acetylmuramate--L-alanine ligase.